The sequence spans 247 residues: ATP synthase subunit a (247 aa).

Helical transmembrane passes span 23–43 (ISFTNSSAMMVLSICLITLFL), 90–110 (LFMFVLFGNLLGMMPIPVIGF), 116–136 (VIVTFAMALVVFVGVTVIGFA), 145–165 (MFFPHGAPIATAVILIPIELI), 194–214 (GFVVSLGAFYLIPGAVPFAFL), and 215–235 (SAITVLEFGIALLQAYVFTIL).

It belongs to the ATPase A chain family. In terms of assembly, F-type ATPases have 2 components, CF(1) - the catalytic core - and CF(0) - the membrane proton channel. CF(1) has five subunits: alpha(3), beta(3), gamma(1), delta(1), epsilon(1). CF(0) has three main subunits: a(1), b(2) and c(9-12). The alpha and beta chains form an alternating ring which encloses part of the gamma chain. CF(1) is attached to CF(0) by a central stalk formed by the gamma and epsilon chains, while a peripheral stalk is formed by the delta and b chains.

The protein localises to the cell inner membrane. Key component of the proton channel; it plays a direct role in the translocation of protons across the membrane. This Paramagnetospirillum magneticum (strain ATCC 700264 / AMB-1) (Magnetospirillum magneticum) protein is ATP synthase subunit a.